The primary structure comprises 107 residues: MSLMYPSVDELLNKVDSRYKLIALASKRAKELEELPRLKDELLKLKREEKPTDRDKKQIQEIAAQLETLVGPTLDNYKSVKPIGRALEEINAGNVQIDPVNKDKSED.

This sequence belongs to the RNA polymerase subunit omega family. In terms of assembly, the RNAP catalytic core consists of 2 alpha, 1 beta, 1 beta' and 1 omega subunit. When a sigma factor is associated with the core the holoenzyme is formed, which can initiate transcription.

The enzyme catalyses RNA(n) + a ribonucleoside 5'-triphosphate = RNA(n+1) + diphosphate. In terms of biological role, promotes RNA polymerase assembly. Latches the N- and C-terminal regions of the beta' subunit thereby facilitating its interaction with the beta and alpha subunits. The protein is DNA-directed RNA polymerase subunit omega of Oenococcus oeni (strain ATCC BAA-331 / PSU-1).